Here is a 115-residue protein sequence, read N- to C-terminus: NADH-ubiquinone oxidoreductase chain 3 (115 aa).

3 helical membrane-spanning segments follow: residues L3–W23, F55–L75, and T86–W106.

It belongs to the complex I subunit 3 family. In terms of assembly, core subunit of respiratory chain NADH dehydrogenase (Complex I) which is composed of 45 different subunits. Interacts with TMEM186. Interacts with TMEM242.

It is found in the mitochondrion inner membrane. The catalysed reaction is a ubiquinone + NADH + 5 H(+)(in) = a ubiquinol + NAD(+) + 4 H(+)(out). Its function is as follows. Core subunit of the mitochondrial membrane respiratory chain NADH dehydrogenase (Complex I) which catalyzes electron transfer from NADH through the respiratory chain, using ubiquinone as an electron acceptor. Essential for the catalytic activity of complex I. This Rattus norvegicus (Rat) protein is NADH-ubiquinone oxidoreductase chain 3.